Consider the following 341-residue polypeptide: Anthranilate phosphoribosyltransferase (341 aa).

5-phospho-alpha-D-ribose 1-diphosphate is bound by residues glycine 84, 87–88 (GD), threonine 92, 94–97 (NIST), 112–120 (KHGNRSVSS), and serine 124. Glycine 84 contacts anthranilate. Serine 96 contributes to the Mg(2+) binding site. Asparagine 115 contacts anthranilate. An anthranilate-binding site is contributed by arginine 170. Mg(2+)-binding residues include aspartate 229 and glutamate 230.

The protein belongs to the anthranilate phosphoribosyltransferase family. Homodimer. Requires Mg(2+) as cofactor.

It carries out the reaction N-(5-phospho-beta-D-ribosyl)anthranilate + diphosphate = 5-phospho-alpha-D-ribose 1-diphosphate + anthranilate. The protein operates within amino-acid biosynthesis; L-tryptophan biosynthesis; L-tryptophan from chorismate: step 2/5. In terms of biological role, catalyzes the transfer of the phosphoribosyl group of 5-phosphorylribose-1-pyrophosphate (PRPP) to anthranilate to yield N-(5'-phosphoribosyl)-anthranilate (PRA). The polypeptide is Anthranilate phosphoribosyltransferase (Polynucleobacter necessarius subsp. necessarius (strain STIR1)).